The primary structure comprises 275 residues: uncharacterized protein (275 aa).

The span at 148–158 (TFPTTAPSITP) shows a compositional bias: polar residues. The disordered stretch occupies residues 148–173 (TFPTTAPSITPGNKEGEKTTSTDTDE). Residues 187–207 (ILIAVTLLLSGVAIIVFVIFE) form a helical membrane-spanning segment. The tract at residues 234–264 (GQPPGTAESKPDSQPQKVGQDAANSSNPKKA) is disordered. Over residues 245-261 (DSQPQKVGQDAANSSNP) the composition is skewed to polar residues.

It localises to the membrane. This is an uncharacterized protein from Homo sapiens (Human).